Reading from the N-terminus, the 268-residue chain is 4-hydroxy-tetrahydrodipicolinate reductase (268 aa).

NAD(+)-binding positions include 10–15 (GASGRM), Asp-36, 99–101 (GTT), and 123–126 (APNM). Catalysis depends on His-156, which acts as the Proton donor/acceptor. His-157 lines the (S)-2,3,4,5-tetrahydrodipicolinate pocket. Lys-160 serves as the catalytic Proton donor. (S)-2,3,4,5-tetrahydrodipicolinate is bound at residue 166-167 (GT).

It belongs to the DapB family.

It is found in the cytoplasm. The catalysed reaction is (S)-2,3,4,5-tetrahydrodipicolinate + NAD(+) + H2O = (2S,4S)-4-hydroxy-2,3,4,5-tetrahydrodipicolinate + NADH + H(+). It catalyses the reaction (S)-2,3,4,5-tetrahydrodipicolinate + NADP(+) + H2O = (2S,4S)-4-hydroxy-2,3,4,5-tetrahydrodipicolinate + NADPH + H(+). Its pathway is amino-acid biosynthesis; L-lysine biosynthesis via DAP pathway; (S)-tetrahydrodipicolinate from L-aspartate: step 4/4. Catalyzes the conversion of 4-hydroxy-tetrahydrodipicolinate (HTPA) to tetrahydrodipicolinate. The chain is 4-hydroxy-tetrahydrodipicolinate reductase from Janthinobacterium sp. (strain Marseille) (Minibacterium massiliensis).